The primary structure comprises 295 residues: Elongation factor Ts (295 aa).

The interval 80 to 83 (TDFV) is involved in Mg(2+) ion dislocation from EF-Tu.

It belongs to the EF-Ts family.

Its subcellular location is the cytoplasm. Associates with the EF-Tu.GDP complex and induces the exchange of GDP to GTP. It remains bound to the aminoacyl-tRNA.EF-Tu.GTP complex up to the GTP hydrolysis stage on the ribosome. The protein is Elongation factor Ts of Lysinibacillus sphaericus (strain C3-41).